A 244-amino-acid polypeptide reads, in one-letter code: Isoprenyl transferase (244 aa).

Asp20 is a catalytic residue. Residue Asp20 participates in Mg(2+) binding. Substrate is bound by residues 21 to 24 (GNGR), Trp25, Arg33, His37, and 65 to 67 (SSE). The Proton acceptor role is filled by Asn68. Residues Trp69, Arg71, Arg188, and 194 to 196 (RIS) each bind substrate. Residue Glu207 participates in Mg(2+) binding.

It belongs to the UPP synthase family. In terms of assembly, homodimer. The cofactor is Mg(2+).

Catalyzes the condensation of isopentenyl diphosphate (IPP) with allylic pyrophosphates generating different type of terpenoids. The sequence is that of Isoprenyl transferase from Rhodopirellula baltica (strain DSM 10527 / NCIMB 13988 / SH1).